The sequence spans 135 residues: MADNFNFEFVSPERLLISEKVSEVVIPATEGEMTVMAHHAPTMTVIKPGVVTVKFASGKTGKYVIFGGFADITPERLTLLAESAVPVDELSRDTLMKRIELAKAELDDTENHEHRTKLEQFLNAMTHLNGVLVPA.

The protein belongs to the ATPase epsilon chain family. F-type ATPases have 2 components, CF(1) - the catalytic core - and CF(0) - the membrane proton channel. CF(1) has five subunits: alpha(3), beta(3), gamma(1), delta(1), epsilon(1). CF(0) has three main subunits: a, b and c.

Its subcellular location is the cell inner membrane. Functionally, produces ATP from ADP in the presence of a proton gradient across the membrane. The sequence is that of ATP synthase epsilon chain from Allorhizobium ampelinum (strain ATCC BAA-846 / DSM 112012 / S4) (Agrobacterium vitis (strain S4)).